The primary structure comprises 343 residues: Dual oxidase maturation factor 1 (343 aa).

At 1 to 24 the chain is on the extracellular side; it reads MATLGHTFPFYAGPKPTFPMDTTL. The chain crosses the membrane as a helical span at residues 25-45; the sequence is ASIIMIFLTALATFIVILPGI. The Cytoplasmic portion of the chain corresponds to 46-51; it reads RGKTRL. A helical transmembrane segment spans residues 52-72; it reads FWLLRVVTSLFIGAAILAVNF. Residues 73–183 lie on the Extracellular side of the membrane; that stretch reads SSEWSVGQVS…RLAGHYTSAM (111 aa). 3 N-linked (GlcNAc...) asparagine glycosylation sites follow: N84, N109, and N121. Residues 184-204 traverse the membrane as a helical segment; the sequence is LWVAFLCWLLANVMLSMPVLV. At 205-206 the chain is on the cytoplasmic side; it reads YG. The helical transmembrane segment at 207–227 threads the bilayer; the sequence is GYMLLATGIFQLLALLFFSMA. The Extracellular segment spans residues 228-249; the sequence is TSLTSPCPLHLGASVLHTHHGP. Residues 250-270 traverse the membrane as a helical segment; the sequence is AFWITLTTGLLCVLLGLAMAV. At 271–343 the chain is on the cytoplasmic side; the sequence is AHRMQPHRLK…AHPKDPDCAL (73 aa). Residues 306-343 are disordered; that stretch reads RYRSMADSPKSQDIPLSEASSTKAYCKEAHPKDPDCAL. Residues 330–343 show a composition bias toward basic and acidic residues; it reads YCKEAHPKDPDCAL.

The protein belongs to the DUOXA family. As to quaternary structure, may interact with NUMB. As to expression, specifically expressed in thyroid gland. Also detected in esophagus.

It localises to the membrane. Its function is as follows. May be required for the maturation and the transport from the endoplasmic reticulum to the plasma membrane of functional DUOX1. In Homo sapiens (Human), this protein is Dual oxidase maturation factor 1 (DUOXA1).